A 90-amino-acid chain; its full sequence is Mitochondrial import inner membrane translocase subunit Tim8 A (90 aa).

Positions 36 to 59 (CWEKCMDKPGPKLDSRTEVCFVNC) match the Twin CX3C motif motif. Cystine bridges form between C36–C59 and C40–C55.

It belongs to the small Tim family. Heterohexamer; composed of 3 copies of TIMM8A and 3 copies of TIMM13, named soluble 70 kDa complex. Associates with the TIM22 complex, whose core is composed of TIMM22.

The protein resides in the mitochondrion inner membrane. Its function is as follows. Mitochondrial intermembrane chaperone that participates in the import and insertion of some multi-pass transmembrane proteins into the mitochondrial inner membrane. Also required for the transfer of beta-barrel precursors from the TOM complex to the sorting and assembly machinery (SAM complex) of the outer membrane. Acts as a chaperone-like protein that protects the hydrophobic precursors from aggregation and guide them through the mitochondrial intermembrane space. The TIMM8-TIMM13 complex mediates the import of some proteins while the predominant TIMM9-TIMM10 70 kDa complex mediates the import of much more proteins. The sequence is that of Mitochondrial import inner membrane translocase subunit Tim8 A (timm8a) from Danio rerio (Zebrafish).